The primary structure comprises 261 residues: Indole-3-glycerol phosphate synthase (261 aa).

The protein belongs to the TrpC family.

The enzyme catalyses 1-(2-carboxyphenylamino)-1-deoxy-D-ribulose 5-phosphate + H(+) = (1S,2R)-1-C-(indol-3-yl)glycerol 3-phosphate + CO2 + H2O. The protein operates within amino-acid biosynthesis; L-tryptophan biosynthesis; L-tryptophan from chorismate: step 4/5. This chain is Indole-3-glycerol phosphate synthase, found in Alkaliphilus metalliredigens (strain QYMF).